The primary structure comprises 67 residues: DNA-directed RNA polymerase subunit omega (67 aa).

This sequence belongs to the RNA polymerase subunit omega family. In terms of assembly, the RNAP catalytic core consists of 2 alpha, 1 beta, 1 beta' and 1 omega subunit. When a sigma factor is associated with the core the holoenzyme is formed, which can initiate transcription.

The catalysed reaction is RNA(n) + a ribonucleoside 5'-triphosphate = RNA(n+1) + diphosphate. In terms of biological role, promotes RNA polymerase assembly. Latches the N- and C-terminal regions of the beta' subunit thereby facilitating its interaction with the beta and alpha subunits. This is DNA-directed RNA polymerase subunit omega from Paracidovorax citrulli (strain AAC00-1) (Acidovorax citrulli).